Reading from the N-terminus, the 374-residue chain is Queuine tRNA-ribosyltransferase (374 aa).

Residue Asp89 is the Proton acceptor of the active site. Substrate-binding positions include 89-93 (DSGGF), Asp143, Gln187, and Gly214. An RNA binding region spans residues 245–251 (GVGKPED). The active-site Nucleophile is Asp264. The segment at 269-273 (TRNAR) is RNA binding; important for wobble base 34 recognition. Residues Cys302, Cys304, Cys307, and His333 each contribute to the Zn(2+) site.

It belongs to the queuine tRNA-ribosyltransferase family. In terms of assembly, homodimer. Within each dimer, one monomer is responsible for RNA recognition and catalysis, while the other monomer binds to the replacement base PreQ1. Requires Zn(2+) as cofactor.

It carries out the reaction 7-aminomethyl-7-carbaguanine + guanosine(34) in tRNA = 7-aminomethyl-7-carbaguanosine(34) in tRNA + guanine. The protein operates within tRNA modification; tRNA-queuosine biosynthesis. Catalyzes the base-exchange of a guanine (G) residue with the queuine precursor 7-aminomethyl-7-deazaguanine (PreQ1) at position 34 (anticodon wobble position) in tRNAs with GU(N) anticodons (tRNA-Asp, -Asn, -His and -Tyr). Catalysis occurs through a double-displacement mechanism. The nucleophile active site attacks the C1' of nucleotide 34 to detach the guanine base from the RNA, forming a covalent enzyme-RNA intermediate. The proton acceptor active site deprotonates the incoming PreQ1, allowing a nucleophilic attack on the C1' of the ribose to form the product. After dissociation, two additional enzymatic reactions on the tRNA convert PreQ1 to queuine (Q), resulting in the hypermodified nucleoside queuosine (7-(((4,5-cis-dihydroxy-2-cyclopenten-1-yl)amino)methyl)-7-deazaguanosine). The sequence is that of Queuine tRNA-ribosyltransferase from Shewanella baltica (strain OS185).